A 380-amino-acid polypeptide reads, in one-letter code: Chaperone protein DnaJ (380 aa).

The 66-residue stretch at 4–69 (DYYEILGVTR…QKRAAYDRFG (66 aa)) folds into the J domain. Residues 135–213 (GKTAQINIPS…CQGTRRVEKN (79 aa)) form a CR-type zinc finger. Zn(2+) contacts are provided by C148, C151, C165, C168, C187, C190, C201, and C204. CXXCXGXG motif repeat units follow at residues 148–155 (CDSCEGSG), 165–172 (CGTCHGAG), 187–194 (CHACNGRG), and 201–208 (CPKCQGTR).

This sequence belongs to the DnaJ family. Homodimer. Requires Zn(2+) as cofactor.

It is found in the cytoplasm. In terms of biological role, participates actively in the response to hyperosmotic and heat shock by preventing the aggregation of stress-denatured proteins and by disaggregating proteins, also in an autonomous, DnaK-independent fashion. Unfolded proteins bind initially to DnaJ; upon interaction with the DnaJ-bound protein, DnaK hydrolyzes its bound ATP, resulting in the formation of a stable complex. GrpE releases ADP from DnaK; ATP binding to DnaK triggers the release of the substrate protein, thus completing the reaction cycle. Several rounds of ATP-dependent interactions between DnaJ, DnaK and GrpE are required for fully efficient folding. Also involved, together with DnaK and GrpE, in the DNA replication of plasmids through activation of initiation proteins. The sequence is that of Chaperone protein DnaJ from Bartonella quintana (strain Toulouse) (Rochalimaea quintana).